A 257-amino-acid polypeptide reads, in one-letter code: Putative pentatricopeptide repeat-containing protein At1g43010 (257 aa).

PPR repeat units follow at residues 133 to 168 (KMRDYSVLLSSYTKPVRTVDKAEATFKKMRELGFLL) and 169 to 203 (KPYLFNSMICLYGQLQRLDMVEKLLYKLKKNNMEV).

The protein belongs to the PPR family. P subfamily.

This chain is Putative pentatricopeptide repeat-containing protein At1g43010, found in Arabidopsis thaliana (Mouse-ear cress).